Here is a 166-residue protein sequence, read N- to C-terminus: MKYTSSFLALLLCVLLGFSGSYGQGPFFKEIENLKEYFNASNPDVAKGGPLFSEILKNWKEESDKKIIQSQIVSFYFKLFENLKDNQVIQRSMDIIKQDMFQKFLNGSSEKLEDFKRLIQIPVDDLQIQRKAINELIKVMNDLSPKSNLRKRKRSQNLFRGRRASM.

The N-terminal stretch at 1–23 (MKYTSSFLALLLCVLLGFSGSYG) is a signal peptide. Gln-24 carries the post-translational modification Pyrrolidone carboxylic acid. Asn-39 and Asn-106 each carry an N-linked (GlcNAc...) asparagine glycan.

The protein belongs to the type II (or gamma) interferon family. Homodimer. Interacts with IFNGR1 (via extracellular domain); this interaction promotes IFNGR1 dimerization. As to expression, released primarily from activated T lymphocytes.

The protein resides in the secreted. In terms of biological role, type II interferon produced by immune cells such as T-cells and NK cells that plays crucial roles in antimicrobial, antiviral, and antitumor responses by activating effector immune cells and enhancing antigen presentation. Primarily signals through the JAK-STAT pathway after interaction with its receptor IFNGR1 to affect gene regulation. Upon IFNG binding, IFNGR1 intracellular domain opens out to allow association of downstream signaling components JAK2, JAK1 and STAT1, leading to STAT1 activation, nuclear translocation and transcription of IFNG-regulated genes. Many of the induced genes are transcription factors such as IRF1 that are able to further drive regulation of a next wave of transcription. Plays a role in class I antigen presentation pathway by inducing a replacement of catalytic proteasome subunits with immunoproteasome subunits. In turn, increases the quantity, quality, and repertoire of peptides for class I MHC loading. Increases the efficiency of peptide generation also by inducing the expression of activator PA28 that associates with the proteasome and alters its proteolytic cleavage preference. Up-regulates as well MHC II complexes on the cell surface by promoting expression of several key molecules such as cathepsins B/CTSB, H/CTSH, and L/CTSL. Participates in the regulation of hematopoietic stem cells during development and under homeostatic conditions by affecting their development, quiescence, and differentiation. This is Interferon gamma (IFNG) from Ovis aries (Sheep).